The chain runs to 345 residues: Type II methyltransferase M.AplI (345 aa).

Residues Leu-25–Lys-325 enclose the SAM-dependent MTase C5-type domain. Cys-93 is an active-site residue.

The protein belongs to the class I-like SAM-binding methyltransferase superfamily. C5-methyltransferase family.

The catalysed reaction is a 2'-deoxycytidine in DNA + S-adenosyl-L-methionine = a 5-methyl-2'-deoxycytidine in DNA + S-adenosyl-L-homocysteine + H(+). Functionally, a methylase, recognizes the double-stranded sequence 5'-CTGCAG-3', methylates C-4 on both strands, and protects the DNA from cleavage by the AplI endonuclease. The protein is Type II methyltransferase M.AplI (aplIM) of Arthrospira platensis (strain NIES-39 / UTEX 3086 / IAM M-135) (Spirulina platensis).